The primary structure comprises 413 residues: NPL4-like protein 1 (413 aa).

Phosphoserine is present on S104. Positions 131-272 (SVSFDRDCAN…ADVHFEPFQM (142 aa)) constitute an MPN domain.

Belongs to the NPL4 family.

It functions in the pathway protein degradation; proteasomal ubiquitin-dependent pathway. In terms of biological role, may be part of a complex that binds ubiquitinated proteins and that is necessary for the export of misfolded proteins from the ER to the cytoplasm, where they are degraded by the proteasome. The sequence is that of NPL4-like protein 1 from Arabidopsis thaliana (Mouse-ear cress).